The chain runs to 250 residues: Probable fimbrial chaperone YfcS (250 aa).

Residues 1–28 (MSDLLCSAKLGAMTLALLLSATSLSALA) form the signal peptide.

The protein belongs to the periplasmic pilus chaperone family.

Its subcellular location is the periplasm. Part of the yfcOPQRSUV fimbrial operon. Could contribute to adhesion to various surfaces in specific environmental niches. Increases adhesion to eukaryotic T24 bladder epithelial cells in the absence of fim genes. The polypeptide is Probable fimbrial chaperone YfcS (yfcS) (Escherichia coli (strain K12)).